The chain runs to 1277 residues: Myosin-1 (1277 aa).

A compositionally biased stretch (basic residues) spans 1 to 13 (MAPSKKAGKKVTP). The tract at residues 1–27 (MAPSKKAGKKVTPKKAAGNNAKSKVAK) is disordered. Residues 39 to 718 (VGVTDMTLLT…TLFALETMRD (680 aa)) enclose the Myosin motor domain. 132–139 (GESGAGKT) contacts ATP. A Phosphoserine modification is found at Ser-360. Positions 407–489 (IIGILDIFGF…PGIFAALNDA (83 aa)) are actin-binding. Residues 567–587 (LFPDRPDPNSKKRPPTASDRI) are disordered. IQ domains follow at residues 722 to 742 (HNMA…KHEC) and 743 to 768 (ARRI…YGHQ). Residues 776-965 (RRRFSLLSYR…TVHVPSGEPA (190 aa)) form the TH1 domain. 2 disordered regions span residues 952 to 1072 (YKSH…AEPE) and 1129 to 1259 (PKAA…GPGQ). The segment covering 1015–1056 (PAVATPSVVSTPAAAAVVSKPKPAASTPAAVRAPAVTPAARS) has biased composition (low complexity). The span at 1057-1068 (VPPPPPPPPPAR) shows a compositional bias: pro residues. One can recognise an SH3 domain in the interval 1071-1129 (PEKEMYRAKFDFQGQEGEMSLTKDDEVELIEKDENGWWLVKKDGVEAWAPYNYLERIAP). Pro residues predominate over residues 1132–1142 (APAPPPPPARP). 2 stretches are compositionally biased toward polar residues: residues 1145 to 1159 (TSTV…TTAD) and 1185 to 1197 (AATT…SSRP). A compositionally biased stretch (pro residues) spans 1204–1224 (VPPPVAAKPKPPVVAPKPGVP). The segment covering 1226 to 1240 (PGGKPALPTTARPAP) has biased composition (low complexity). The segment covering 1241–1258 (SGGGAAAGRLGGGGGGPG) has biased composition (gly residues).

Belongs to the TRAFAC class myosin-kinesin ATPase superfamily. Myosin family. Post-translationally, phosphorylation of the TEDS site (Ser-360) is required for the polarization of the actin cytoskeleton. Phosphorylation probably activates the myosin-I ATPase activity.

Its subcellular location is the cytoplasm. It localises to the cytoskeleton. The protein localises to the actin patch. In terms of biological role, type-I myosin implicated in the organization of the actin cytoskeleton. Required for proper actin cytoskeleton polarization. At the cell cortex, assembles in patch-like structures together with proteins from the actin-polymerizing machinery and promotes actin assembly. Functions as actin nucleation-promoting factor (NPF) for the Arp2/3 complex. The polypeptide is Myosin-1 (MYO1) (Coprinopsis cinerea (strain Okayama-7 / 130 / ATCC MYA-4618 / FGSC 9003) (Inky cap fungus)).